Here is a 458-residue protein sequence, read N- to C-terminus: Flavohemoprotein (458 aa).

Positions 2 to 158 (PLSEDTIKAV…LAHLFVRREE (157 aa)) constitute a Globin domain. H107 serves as a coordination point for heme b. Active-site charge relay system residues include Y117 and E157. A reductase region spans residues 169 to 457 (GGWRQTRSFR…FEMFGPFKPL (289 aa)). One can recognise an FAD-binding FR-type domain in the interval 172 to 279 (RQTRSFRVEE…APPYGDFFLE (108 aa)). FAD-binding positions include Y211 and 228–231 (RQYS). 320–325 (GIGQTP) is a binding site for NADP(+). 450–453 (MFGP) is an FAD binding site.

It belongs to the globin family. Two-domain flavohemoproteins subfamily. This sequence in the C-terminal section; belongs to the flavoprotein pyridine nucleotide cytochrome reductase family. As to quaternary structure, monomer. It depends on heme b as a cofactor. The cofactor is FAD.

The catalysed reaction is 2 nitric oxide + NADPH + 2 O2 = 2 nitrate + NADP(+) + H(+). The enzyme catalyses 2 nitric oxide + NADH + 2 O2 = 2 nitrate + NAD(+) + H(+). Its function is as follows. Flavohemoprotein involved in nitric oxide (NO) detoxification in an aerobic process, termed nitric oxide dioxygenase (NOD) reaction that utilizes O(2) and NAD(P)H to convert NO to nitrate, which protects the protozoan parasite from various noxious nitrogen compounds. Therefore, plays a central role in the inducible response to nitrosative stress. May also be involved in O(2) detoxification. The sequence is that of Flavohemoprotein (hmpA) from Giardia intestinalis (strain ATCC 50581 / GS clone H7) (Giardia lamblia).